The sequence spans 107 residues: SH3 domain-binding glutamic acid-rich-like protein 2 (107 aa).

Residues 61-67 carry the SH3-binding motif; sequence QGNPLPP.

The protein belongs to the SH3BGR family. Highly expressed in brain, placenta, liver and kidney. Expressed in retina.

It is found in the nucleus. This chain is SH3 domain-binding glutamic acid-rich-like protein 2 (SH3BGRL2), found in Homo sapiens (Human).